We begin with the raw amino-acid sequence, 541 residues long: Protein wntless homolog (541 aa).

The Cytoplasmic segment spans residues 1–15 (MAGAIIENMSTKKLC). The chain crosses the membrane as a helical span at residues 16-36 (IVGGILLVFQIVAFLVGGLIA). Residues 37–232 (PAPTTAVSYV…GIHQNGGFTK (196 aa)) lie on the Lumenal side of the membrane. The interval 101–202 (MEMSPWFQFM…KYYLLNIRLP (102 aa)) is interaction with Wnt proteins. The helical transmembrane segment at 233 to 253 (VWFAMKTFLTPSIFIIMVWYW) threads the bilayer. Residues 254 to 268 (RRITMMSRPPVLLEK) lie on the Cytoplasmic side of the membrane. A helical membrane pass occupies residues 269–289 (VIFALGISMTFINIPVEWFSI). Residues 290 to 303 (GFDWTWMLLFGDIR) lie on the Lumenal side of the membrane. A helical membrane pass occupies residues 304–324 (QGIFYAMLLSFWIIFCGEHMM). Residues 325–331 (DQHERNH) are Cytoplasmic-facing. Residues 332 to 352 (IAGYWKQVGPIAVGSFCLFIF) traverse the membrane as a helical segment. At 353 to 380 (DMCERGVQLTNPFYSIWTTDVGTELAMA) the chain is on the lumenal side. Residues 381-401 (FIIVAGICLCLYFLFLCFMVF) form a helical membrane-spanning segment. The Cytoplasmic segment spans residues 402–431 (QVFRNISGKQSSLPAMSKVRRLHYEGLIFR). Residues 432–452 (FKFLMLITLACAAMTVIFFIV) form a helical membrane-spanning segment. Residues 453–471 (SQVTEGHWKWGGVTVQVSS) lie on the Lumenal side of the membrane. The chain crosses the membrane as a helical span at residues 472–492 (AFFTGIYGMWNLYVFALMFLY). The Cytoplasmic portion of the chain corresponds to 493–541 (APSHKNYGEDQSNGDLGVHSGEELQLTTTITHVDGPTEIYKLTRKEAQE).

The protein belongs to the wntless family. In terms of assembly, interacts with WNT3A. Interacts with WNT1, WNT3 and WNT5A. N-glycosylated. In terms of tissue distribution, expressed in the brain, skeletal muscle, heart muscle, lung, gut, liver, and kidney (at protein level). In the brain, expressed in the cortex, striatum, ventral tegmentum, nucleus accumbens and to a lesser extent in the Purkinjie cells in the cerebellum. Expressed in eye iridocorneal angle.

It is found in the golgi apparatus membrane. The protein localises to the cytoplasmic vesicle membrane. It localises to the cell membrane. Its subcellular location is the endoplasmic reticulum membrane. The protein resides in the early endosome membrane. In terms of biological role, regulates Wnt proteins sorting and secretion in a feedback regulatory mechanism. This reciprocal interaction plays a key role in the regulation of expression, subcellular location, binding and organelle-specific association of Wnt proteins. Also plays an important role in establishment of the anterior-posterior body axis formation during development. This is Protein wntless homolog (Wls) from Rattus norvegicus (Rat).